We begin with the raw amino-acid sequence, 61 residues long: UPF0434 protein PSPPH_1629 (61 aa).

The protein belongs to the UPF0434 family.

The polypeptide is UPF0434 protein PSPPH_1629 (Pseudomonas savastanoi pv. phaseolicola (strain 1448A / Race 6) (Pseudomonas syringae pv. phaseolicola (strain 1448A / Race 6))).